A 348-amino-acid polypeptide reads, in one-letter code: Probable malate dehydrogenase 2, mitochondrial (348 aa).

A mitochondrion-targeting transit peptide spans 1 to 9; the sequence is MNKILTRSF. Residue 31–37 participates in NAD(+) binding; it reads GASGQIG. Residues Arg-112 and Arg-118 each contribute to the substrate site. NAD(+)-binding positions include Asn-125, Gln-132, and 150–152; that span reads VGN. 2 residues coordinate substrate: Asn-152 and Arg-183. His-208 serves as the catalytic Proton acceptor.

This sequence belongs to the LDH/MDH superfamily. MDH type 2 family. In terms of assembly, homodimer.

The protein localises to the mitochondrion. The enzyme catalyses (S)-malate + NAD(+) = oxaloacetate + NADH + H(+). Its function is as follows. Catalyzes the reversible oxidation of malate to oxaloacetate. The polypeptide is Probable malate dehydrogenase 2, mitochondrial (mdhB) (Dictyostelium discoideum (Social amoeba)).